Here is a 258-residue protein sequence, read N- to C-terminus: Tryptophan synthase alpha chain (258 aa).

Residues E52 and D63 each act as proton acceptor in the active site.

The protein belongs to the TrpA family. As to quaternary structure, tetramer of two alpha and two beta chains.

The catalysed reaction is (1S,2R)-1-C-(indol-3-yl)glycerol 3-phosphate + L-serine = D-glyceraldehyde 3-phosphate + L-tryptophan + H2O. The protein operates within amino-acid biosynthesis; L-tryptophan biosynthesis; L-tryptophan from chorismate: step 5/5. In terms of biological role, the alpha subunit is responsible for the aldol cleavage of indoleglycerol phosphate to indole and glyceraldehyde 3-phosphate. This chain is Tryptophan synthase alpha chain, found in Streptococcus pneumoniae (strain ATCC 700669 / Spain 23F-1).